Consider the following 126-residue polypeptide: Aspartate 1-decarboxylase (126 aa).

Residue serine 25 is the Schiff-base intermediate with substrate; via pyruvic acid of the active site. Pyruvic acid (Ser) is present on serine 25. Residue threonine 57 participates in substrate binding. Residue tyrosine 58 is the Proton donor of the active site. Substrate is bound at residue 73–75; that stretch reads GAA.

This sequence belongs to the PanD family. As to quaternary structure, heterooctamer of four alpha and four beta subunits. Pyruvate serves as cofactor. Is synthesized initially as an inactive proenzyme, which is activated by self-cleavage at a specific serine bond to produce a beta-subunit with a hydroxyl group at its C-terminus and an alpha-subunit with a pyruvoyl group at its N-terminus.

The protein localises to the cytoplasm. It catalyses the reaction L-aspartate + H(+) = beta-alanine + CO2. Its pathway is cofactor biosynthesis; (R)-pantothenate biosynthesis; beta-alanine from L-aspartate: step 1/1. In terms of biological role, catalyzes the pyruvoyl-dependent decarboxylation of aspartate to produce beta-alanine. The sequence is that of Aspartate 1-decarboxylase from Chromohalobacter salexigens (strain ATCC BAA-138 / DSM 3043 / CIP 106854 / NCIMB 13768 / 1H11).